Consider the following 66-residue polypeptide: Large ribosomal subunit protein bL35 (66 aa).

It belongs to the bacterial ribosomal protein bL35 family.

This Synechococcus sp. (strain RCC307) protein is Large ribosomal subunit protein bL35.